The chain runs to 402 residues: Major outer membrane porin (402 aa).

Positions 1–22 are cleaved as a signal peptide; it reads MKKLLKSALLFAATGSALSLQA.

Belongs to the chlamydial porin (CP) (TC 1.B.2) family. In terms of assembly, part of a disulfide cross-linked outer membrane complex (COMC) composed of the major outer membrane porin (MOMP), the small cysteine-rich protein (OmcA) and the large cysteine-rich periplasmic protein (OmcB).

The protein localises to the cell outer membrane. In elementary bodies (EBs, the infectious stage, which is able to survive outside the host cell) provides the structural integrity of the outer envelope through disulfide cross-links with the small cysteine-rich protein and the large cysteine-rich periplasmic protein. It has been described in publications as the Sarkosyl-insoluble COMC (Chlamydia outer membrane complex), and serves as the functional equivalent of peptidoglycan. It is present but some of the disulfide bonds are reduced in reticulate bodies (RBs). Functionally, permits diffusion of specific solutes through the outer membrane. This chain is Major outer membrane porin (ompA), found in Chlamydophila psittaci (strain ATCC VR-125 / 6BC) (Chlamydia psittaci).